A 131-amino-acid polypeptide reads, in one-letter code: Insertion element IS1 protein InsB (131 aa).

This sequence belongs to the transposase 27 family.

In terms of biological role, absolutely required for transposition of IS1. This chain is Insertion element IS1 protein InsB (insB), found in Shigella sonnei.